The following is a 642-amino-acid chain: Threonine--tRNA ligase (642 aa).

The TGS domain maps to 1–61 (MPIITLPDGS…STDSDLSIIT (61 aa)). The catalytic stretch occupies residues 243–534 (DHRKIGKQLD…LIEEYAGKFP (292 aa)). Residues Cys-334, His-385, and His-511 each contribute to the Zn(2+) site.

This sequence belongs to the class-II aminoacyl-tRNA synthetase family. Homodimer. The cofactor is Zn(2+).

It localises to the cytoplasm. The enzyme catalyses tRNA(Thr) + L-threonine + ATP = L-threonyl-tRNA(Thr) + AMP + diphosphate + H(+). Functionally, catalyzes the attachment of threonine to tRNA(Thr) in a two-step reaction: L-threonine is first activated by ATP to form Thr-AMP and then transferred to the acceptor end of tRNA(Thr). Also edits incorrectly charged L-seryl-tRNA(Thr). This chain is Threonine--tRNA ligase, found in Shewanella denitrificans (strain OS217 / ATCC BAA-1090 / DSM 15013).